Consider the following 296-residue polypeptide: dTDP-rhamnosyl transferase RfbF (296 aa).

The protein belongs to the glycosyltransferase 2 family.

It participates in bacterial outer membrane biogenesis; lipopolysaccharide biosynthesis. This is dTDP-rhamnosyl transferase RfbF (rfbF) from Shigella flexneri.